The primary structure comprises 204 residues: Holliday junction branch migration complex subunit RuvA (204 aa).

Positions 1 to 64 are domain I; it reads MIGRLQGILL…EDAHLLFGFA (64 aa). The segment at 65 to 143 is domain II; the sequence is QKTDRTLFRE…GIKQSDFFVE (79 aa). The segment at 144-155 is flexible linker; the sequence is STHIPLSPSIES. The tract at residues 156 to 204 is domain III; sequence HSESSSDEAISALIALGYKPAEAEKMVKRVAKPELTSEQVIREALKAAL.

The protein belongs to the RuvA family. In terms of assembly, homotetramer. Forms an RuvA(8)-RuvB(12)-Holliday junction (HJ) complex. HJ DNA is sandwiched between 2 RuvA tetramers; dsDNA enters through RuvA and exits via RuvB. An RuvB hexamer assembles on each DNA strand where it exits the tetramer. Each RuvB hexamer is contacted by two RuvA subunits (via domain III) on 2 adjacent RuvB subunits; this complex drives branch migration. In the full resolvosome a probable DNA-RuvA(4)-RuvB(12)-RuvC(2) complex forms which resolves the HJ.

It is found in the cytoplasm. Its function is as follows. The RuvA-RuvB-RuvC complex processes Holliday junction (HJ) DNA during genetic recombination and DNA repair, while the RuvA-RuvB complex plays an important role in the rescue of blocked DNA replication forks via replication fork reversal (RFR). RuvA specifically binds to HJ cruciform DNA, conferring on it an open structure. The RuvB hexamer acts as an ATP-dependent pump, pulling dsDNA into and through the RuvAB complex. HJ branch migration allows RuvC to scan DNA until it finds its consensus sequence, where it cleaves and resolves the cruciform DNA. In Haemophilus influenzae (strain 86-028NP), this protein is Holliday junction branch migration complex subunit RuvA.